Here is a 135-residue protein sequence, read N- to C-terminus: uncharacterized protein (135 aa).

The region spanning 8-123 (PKGKMVLRTL…IFVYVAVDEF (116 aa)) is the HotDog ACOT-type domain.

It belongs to the acyl coenzyme A hydrolase family.

This is an uncharacterized protein from Buchnera aphidicola subsp. Baizongia pistaciae (strain Bp).